The chain runs to 361 residues: Septin-1 (361 aa).

In terms of domain architecture, Septin-type G spans 32-304 (KGFEFTLMVV…ENYRSDRLAK (273 aa)). Residues 42-49 (GESGLGKS) form a G1 motif region. Residues 42–49 (GESGLGKS), Thr76, Gly102, 181–189 (KADCLTKKE), Gly239, and Arg254 each bind GTP. Residues 99–102 (DTPG) form a G3 motif region. A G4 motif region spans residues 180 to 183 (AKAD). Ser319 is modified (phosphoserine).

It belongs to the TRAFAC class TrmE-Era-EngA-EngB-Septin-like GTPase superfamily. Septin GTPase family. As to quaternary structure, likely part of a multicomponent septin complex that includes pnut. Interacts with pnut. Interacts with park. Post-translationally, ubiquitinated by park, leading to its degradation by the proteasome. Accumulates at the leading edge of the cleavage furrow in dividing cells and cellularizing embryos (at protein level). Also accumulates at the leading edge of the embryo epithelium during dorsal closure, in the embryonic neurons, and at the baso-lateral surfaces of ovarian follicle cells (at protein level).

It localises to the cytoplasm. Functionally, involved in cytokinesis. May be involved in p53-dependent apoptosis. This is Septin-1 from Drosophila melanogaster (Fruit fly).